Reading from the N-terminus, the 151-residue chain is SsrA-binding protein (151 aa).

Residues 124–151 (GKKLHDKRESEKERDWNRQKSRLLKAHG) are disordered. Residues 129 to 141 (DKRESEKERDWNR) show a composition bias toward basic and acidic residues. Positions 142–151 (QKSRLLKAHG) are enriched in basic residues.

The protein belongs to the SmpB family.

It localises to the cytoplasm. Its function is as follows. Required for rescue of stalled ribosomes mediated by trans-translation. Binds to transfer-messenger RNA (tmRNA), required for stable association of tmRNA with ribosomes. tmRNA and SmpB together mimic tRNA shape, replacing the anticodon stem-loop with SmpB. tmRNA is encoded by the ssrA gene; the 2 termini fold to resemble tRNA(Ala) and it encodes a 'tag peptide', a short internal open reading frame. During trans-translation Ala-aminoacylated tmRNA acts like a tRNA, entering the A-site of stalled ribosomes, displacing the stalled mRNA. The ribosome then switches to translate the ORF on the tmRNA; the nascent peptide is terminated with the 'tag peptide' encoded by the tmRNA and targeted for degradation. The ribosome is freed to recommence translation, which seems to be the essential function of trans-translation. The polypeptide is SsrA-binding protein (Rhizobium johnstonii (strain DSM 114642 / LMG 32736 / 3841) (Rhizobium leguminosarum bv. viciae)).